We begin with the raw amino-acid sequence, 126 residues long: C-X-C motif chemokine 9 (126 aa).

An N-terminal signal peptide occupies residues 1-21; the sequence is MKSAVLFLLGIIFLEQCGVRG. Disulfide bonds link cysteine 30–cysteine 57 and cysteine 32–cysteine 73. Asparagine 58 carries N-linked (GlcNAc...) asparagine glycosylation. The segment at 91-126 is disordered; sequence KISQKKKQKRGKKHQKNMKNRKPKTPQSRRRSRKTT. Positions 93 to 126 are enriched in basic residues; that stretch reads SQKKKQKRGKKHQKNMKNRKPKTPQSRRRSRKTT.

It belongs to the intercrine alpha (chemokine CxC) family.

The protein localises to the secreted. Its function is as follows. May be a cytokine that affects the growth, movement, or activation state of cells that participate in immune and inflammatory response. The polypeptide is C-X-C motif chemokine 9 (Cxcl9) (Mus musculus (Mouse)).